Consider the following 88-residue polypeptide: MSEKKVERVLTGTVVSNNRNKTIAVLIERKVRHPIYKKYIKRSTKVHAHDEKNKCALGDLVRVVEAKPFSKTKHWALLEVVEKSVFVD.

It belongs to the universal ribosomal protein uS17 family. Part of the 30S ribosomal subunit.

In terms of biological role, one of the primary rRNA binding proteins, it binds specifically to the 5'-end of 16S ribosomal RNA. This chain is Small ribosomal subunit protein uS17, found in Ruthia magnifica subsp. Calyptogena magnifica.